The sequence spans 352 residues: Biotin synthase (352 aa).

One can recognise a Radical SAM core domain in the interval 44–262 (NRVQVSTLLS…LAVARILMPK (219 aa)). Cys-59, Cys-63, and Cys-66 together coordinate [4Fe-4S] cluster. [2Fe-2S] cluster-binding residues include Cys-103, Cys-134, Cys-194, and Arg-266.

The protein belongs to the radical SAM superfamily. Biotin synthase family. Homodimer. [4Fe-4S] cluster serves as cofactor. Requires [2Fe-2S] cluster as cofactor.

The catalysed reaction is (4R,5S)-dethiobiotin + (sulfur carrier)-SH + 2 reduced [2Fe-2S]-[ferredoxin] + 2 S-adenosyl-L-methionine = (sulfur carrier)-H + biotin + 2 5'-deoxyadenosine + 2 L-methionine + 2 oxidized [2Fe-2S]-[ferredoxin]. It participates in cofactor biosynthesis; biotin biosynthesis; biotin from 7,8-diaminononanoate: step 2/2. Catalyzes the conversion of dethiobiotin (DTB) to biotin by the insertion of a sulfur atom into dethiobiotin via a radical-based mechanism. This Pseudomonas syringae pv. syringae (strain B728a) protein is Biotin synthase.